We begin with the raw amino-acid sequence, 261 residues long: Indole-3-glycerol phosphate synthase (261 aa).

This sequence belongs to the TrpC family.

It catalyses the reaction 1-(2-carboxyphenylamino)-1-deoxy-D-ribulose 5-phosphate + H(+) = (1S,2R)-1-C-(indol-3-yl)glycerol 3-phosphate + CO2 + H2O. The protein operates within amino-acid biosynthesis; L-tryptophan biosynthesis; L-tryptophan from chorismate: step 4/5. This is Indole-3-glycerol phosphate synthase from Burkholderia lata (strain ATCC 17760 / DSM 23089 / LMG 22485 / NCIMB 9086 / R18194 / 383).